Reading from the N-terminus, the 318-residue chain is Guanidinopropionase (318 aa).

Histidine 126, aspartate 148, histidine 150, aspartate 152, aspartate 240, and aspartate 242 together coordinate Mn(2+).

It belongs to the arginase family. Agmatinase subfamily. As to quaternary structure, homohexamer. It depends on Mn(2+) as a cofactor.

It catalyses the reaction 3-guanidinopropanoate + H2O = urea + beta-alanine. In terms of biological role, catalyzes the hydrolysis of 3-guanidinopropanoate to beta-alanine and urea. Possesses low activity against 4-guanidinobutanoate. Has no activity against arginine and agmatine. This chain is Guanidinopropionase (gpuA), found in Pseudomonas aeruginosa (strain ATCC 15692 / DSM 22644 / CIP 104116 / JCM 14847 / LMG 12228 / 1C / PRS 101 / PAO1).